Reading from the N-terminus, the 641-residue chain is Soluble starch synthase 1, chloroplastic/amyloplastic (641 aa).

Residues 1–113 (MATAAGMGIG…DSIDKTIFVA (113 aa)) constitute a chloroplast transit peptide. The tract at residues 62 to 96 (TFLVPTSTPPAPTQSPAPAPTPPPLPDSGVGEIEP) is disordered. The segment covering 68–87 (STPPAPTQSPAPAPTPPPLP) has biased composition (pro residues). Lys-147 is an ADP-alpha-D-glucose binding site.

The protein belongs to the glycosyltransferase 1 family. Bacterial/plant glycogen synthase subfamily.

It localises to the plastid. It is found in the chloroplast. The protein resides in the amyloplast. It carries out the reaction [(1-&gt;4)-alpha-D-glucosyl](n) + ADP-alpha-D-glucose = [(1-&gt;4)-alpha-D-glucosyl](n+1) + ADP + H(+). It functions in the pathway glycan biosynthesis; starch biosynthesis. This chain is Soluble starch synthase 1, chloroplastic/amyloplastic, found in Oryza sativa subsp. indica (Rice).